The primary structure comprises 813 residues: Hyaluronate lyase HylB (813 aa).

Positions 1–32 form a signal peptide, tat-type signal; it reads MFGTPSRRTFLTASALSAMALAASPTVTDAIA. Active-site residues include asparagine 222, histidine 272, and tyrosine 281.

This sequence belongs to the polysaccharide lyase 8 family. Post-translationally, predicted to be exported by the Tat system. The position of the signal peptide cleavage has not been experimentally proven.

The protein localises to the secreted. The enzyme catalyses [hyaluronan](n) = n 3-(4-deoxy-beta-D-gluc-4-enuronosyl)-N-acetyl-D-glucosamine + H2O. In terms of biological role, degrades hyaluronic acid (HA) exclusively into HA disaccharides (HA-2). Produced HA-2s confer anti-inflammatory properties leading to reduced immunopathology in the mouse model of acne. This chain is Hyaluronate lyase HylB, found in Cutibacterium acnes (strain DSM 16379 / KPA171202) (Propionibacterium acnes).